We begin with the raw amino-acid sequence, 107 residues long: DNA polymerase delta subunit 4 (107 aa).

The PCNA-interaction protein motif (PIP box) signature appears at 1–16 (MGRKRFITDSYPVVKK). The disordered stretch occupies residues 1 to 40 (MGRKRFITDSYPVVKKREGPPGHSKGELAPELGEDTQSLS). Positions 15–28 (KKREGPPGHSKGEL) are enriched in basic and acidic residues.

This sequence belongs to the DNA polymerase delta subunit 4 family. As to quaternary structure, component of the tetrameric DNA polymerase delta complex (Pol-delta4), which consists of POLD1/p125, POLD2/p50, POLD3/p66/p68 and POLD4/p12, with POLD1 bearing DNA polymerase and 3' to 5' proofreading exonuclease activities. Within this complex, directly interacts with POLD1 and POLD2. Directly interacts with PCNA, as do POLD1 and POLD3; this interaction stimulates Pol-delta4 polymerase activity. As POLD1 and POLD2, directly interacts with WRNIP1; this interaction stimulates DNA polymerase delta-mediated DNA synthesis, independently of the presence of PCNA, possibly by increasing initiation frequency. Upon genotoxic stress induced by DNA damaging agents or by replication stress, POLD4 is proteolytically degraded and Pol-delta4 is converted into a trimeric form of the complex (Pol-delta3) that has an increased proofreading activity. The DNA polymerase delta complex interacts with POLDIP2; this interaction is probably mediated through direct binding to POLD2. In terms of processing, ubiquitinated; undergoes 'Lys-48'-linked polyubiquitination in response to UV irradiation or treatment with an alkylating agent, leading to proteasomal degradation. This modification is mediated, at least in part, by RNF8. Ubiquitinated; undergoes 'Lys-48'-linked ubiquitination in response to UV irradiation, leading to proteasomal degradation. This modification is partly mediated by RNF8 and by the DCX(DTL) E3 ubiquitin ligase complex (also called CRL4(CDT2)). Efficient degradation requires the presence of PCNA and is required for the inhibition of fork progression after DNA damage.

Its subcellular location is the nucleus. Its function is as follows. As a component of the tetrameric DNA polymerase delta complex (Pol-delta4), plays a role in high fidelity genome replication and repair. Within this complex, increases the rate of DNA synthesis and decreases fidelity by regulating POLD1 polymerase and proofreading 3' to 5' exonuclease activity. Pol-delta4 participates in Okazaki fragment processing, through both the short flap pathway, as well as a nick translation system. Under conditions of DNA replication stress, required for the repair of broken replication forks through break-induced replication (BIR), a mechanism that may induce segmental genomic duplications of up to 200 kb. Involved in Pol-delta4 translesion synthesis (TLS) of templates carrying O6-methylguanine or abasic sites. Its degradation in response to DNA damage is required for the inhibition of fork progression and cell survival. This is DNA polymerase delta subunit 4 (Pold4) from Mus musculus (Mouse).